The primary structure comprises 247 residues: Flagellin B1 (247 aa).

Residues 1 to 20 (MNKLLRKVRKAFSLKADNKA) constitute a propeptide that is removed on maturation.

It belongs to the archaeal flagellin family. In terms of processing, glycosylated.

The protein resides in the archaeal flagellum. Its function is as follows. Flagellin is the subunit protein which polymerizes to form the filaments of archaeal flagella. This Thermoplasma volcanium (strain ATCC 51530 / DSM 4299 / JCM 9571 / NBRC 15438 / GSS1) protein is Flagellin B1.